The primary structure comprises 197 residues: Casparian strip membrane protein 4 (197 aa).

At 1-34 (MMSSTTIDVPAESSNVAKGKAVLVAAPRPGGWKK) the chain is on the cytoplasmic side. A helical membrane pass occupies residues 35 to 55 (GIAIVDFVLRLGAVAAALGAA). The Extracellular segment spans residues 56-85 (TTMATADQTLPFFTQFFQFEASYDSFTTFQ). The helical transmembrane segment at 86–106 (FFVITMALVGCYLVLSLPLSI) threads the bilayer. Topologically, residues 107 to 118 (VSIIRPHALGPK) are cytoplasmic. Residues 119–139 (LFLIILDTVFLTLATASAASA) traverse the membrane as a helical segment. Topologically, residues 140 to 171 (AAVVYVAHNGNQDSNWLAICNQFGDFCAQTSG) are extracellular. The chain crosses the membrane as a helical span at residues 172–192 (AVVSSLVAVVVFVLLIVMSAL). At 193–197 (ALGKH) the chain is on the cytoplasmic side.

This sequence belongs to the Casparian strip membrane proteins (CASP) family. As to quaternary structure, homodimer and heterodimers.

The protein resides in the cell membrane. Regulates membrane-cell wall junctions and localized cell wall deposition. Required for establishment of the Casparian strip membrane domain (CSD) and the subsequent formation of Casparian strips, a cell wall modification of the root endodermis that determines an apoplastic barrier between the intraorganismal apoplasm and the extraorganismal apoplasm and prevents lateral diffusion. This Lotus japonicus (Lotus corniculatus var. japonicus) protein is Casparian strip membrane protein 4.